Here is a 317-residue protein sequence, read N- to C-terminus: Endochitinase 3 (317 aa).

The first 19 residues, 1 to 19 (MFVRNALVVTGLLAALTQA), serve as a signal peptide directing secretion. 3 N-linked (GlcNAc...) asparagine glycosylation sites follow: asparagine 25, asparagine 49, and asparagine 169. In terms of domain architecture, GH18 spans 29-317 (HKLTVYWGAE…NYQKEIKANL (289 aa)). Catalysis depends on glutamate 170, which acts as the Proton donor. N-linked (GlcNAc...) asparagine glycosylation occurs at asparagine 245.

Belongs to the glycosyl hydrolase 18 family. Chitinase class III subfamily.

Its subcellular location is the secreted. The catalysed reaction is Random endo-hydrolysis of N-acetyl-beta-D-glucosaminide (1-&gt;4)-beta-linkages in chitin and chitodextrins.. Secreted chitinase involved in the degradation of chitin, a component of the cell walls of fungi and exoskeletal elements of some animals (including worms and arthropods). Participates in the infection process and directly acts in the penetration process of the host cuticle. Involved in heat-shock adaptation. The polypeptide is Endochitinase 3 (chi3) (Metarhizium robertsii (strain ARSEF 23 / ATCC MYA-3075) (Metarhizium anisopliae (strain ARSEF 23))).